A 230-amino-acid polypeptide reads, in one-letter code: Ethylene-responsive transcription factor ERF012 (230 aa).

Residues 1-17 (MVKQERKIQTSSTKKEM) are compositionally biased toward basic and acidic residues. Residues 1 to 51 (MVKQERKIQTSSTKKEMPLSSSPSSSSSSSSSSSSSSCKNKNKKSKIKKYK) are disordered. The span at 20-39 (SSSPSSSSSSSSSSSSSSCK) shows a compositional bias: low complexity. A compositionally biased stretch (basic residues) spans 40–51 (NKNKKSKIKKYK). Positions 49–106 (KYKGVRMRSWGSWVSEIRAPNQKTRIWLGSYSTAEAAARAYDVALLCLKGPQANLNFP) form a DNA-binding region, AP2/ERF.

It belongs to the AP2/ERF transcription factor family. ERF subfamily. In terms of tissue distribution, expressed cotyledons, ovules and seeds of immature siliques.

It is found in the nucleus. Functionally, transcriptional activator involved in the regulation of plant development and tolerance to abiotic stresses. Involved in salt and osmotic stress response pathways. May be regulated by the stress-related genes RD29A, RD22, DREB1A or P5CS during stress response. Binds to the GCC-box pathogenesis-related promoter element. May be involved in the regulation of gene expression by stress factors and by components of stress signal transduction pathways. In Arabidopsis thaliana (Mouse-ear cress), this protein is Ethylene-responsive transcription factor ERF012 (ERF012).